Here is a 474-residue protein sequence, read N- to C-terminus: Glycogen synthase (474 aa).

Residue K15 participates in ADP-alpha-D-glucose binding.

This sequence belongs to the glycosyltransferase 1 family. Bacterial/plant glycogen synthase subfamily.

The enzyme catalyses [(1-&gt;4)-alpha-D-glucosyl](n) + ADP-alpha-D-glucose = [(1-&gt;4)-alpha-D-glucosyl](n+1) + ADP + H(+). It participates in glycan biosynthesis; glycogen biosynthesis. Its function is as follows. Synthesizes alpha-1,4-glucan chains using ADP-glucose. This chain is Glycogen synthase, found in Finegoldia magna (strain ATCC 29328 / DSM 20472 / WAL 2508) (Peptostreptococcus magnus).